We begin with the raw amino-acid sequence, 462 residues long: UDP-N-acetylmuramoylalanine--D-glutamate ligase (462 aa).

112–118 (GTNGKTT) serves as a coordination point for ATP.

The protein belongs to the MurCDEF family.

Its subcellular location is the cytoplasm. The enzyme catalyses UDP-N-acetyl-alpha-D-muramoyl-L-alanine + D-glutamate + ATP = UDP-N-acetyl-alpha-D-muramoyl-L-alanyl-D-glutamate + ADP + phosphate + H(+). It functions in the pathway cell wall biogenesis; peptidoglycan biosynthesis. Its function is as follows. Cell wall formation. Catalyzes the addition of glutamate to the nucleotide precursor UDP-N-acetylmuramoyl-L-alanine (UMA). This Nostoc sp. (strain PCC 7120 / SAG 25.82 / UTEX 2576) protein is UDP-N-acetylmuramoylalanine--D-glutamate ligase.